We begin with the raw amino-acid sequence, 629 residues long: Smc-like protein Sph1 (629 aa).

Coiled-coil stretches lie at residues 139-282 and 318-487; these read LETE…LLDD and AETT…NQFD.

This sequence belongs to the Sph1/Sph2 family.

The protein resides in the cytoplasm. Functionally, may play a role in a late step of replication. This is Smc-like protein Sph1 (sph1) from Halobacterium salinarum (strain ATCC 29341 / DSM 671 / R1).